The chain runs to 351 residues: Anthranilate phosphoribosyltransferase (351 aa).

Residues Gly-80, 83–84 (GD), Thr-88, 90–93 (NIST), 108–116 (KHGNRSITS), and Ser-120 contribute to the 5-phospho-alpha-D-ribose 1-diphosphate site. An anthranilate-binding site is contributed by Gly-80. Position 92 (Ser-92) interacts with Mg(2+). Residue Asn-111 coordinates anthranilate. Arg-166 contacts anthranilate. The Mg(2+) site is built by Asp-229 and Glu-230.

This sequence belongs to the anthranilate phosphoribosyltransferase family. In terms of assembly, homodimer. It depends on Mg(2+) as a cofactor.

It carries out the reaction N-(5-phospho-beta-D-ribosyl)anthranilate + diphosphate = 5-phospho-alpha-D-ribose 1-diphosphate + anthranilate. It participates in amino-acid biosynthesis; L-tryptophan biosynthesis; L-tryptophan from chorismate: step 2/5. Catalyzes the transfer of the phosphoribosyl group of 5-phosphorylribose-1-pyrophosphate (PRPP) to anthranilate to yield N-(5'-phosphoribosyl)-anthranilate (PRA). This chain is Anthranilate phosphoribosyltransferase, found in Chlorobaculum parvum (strain DSM 263 / NCIMB 8327) (Chlorobium vibrioforme subsp. thiosulfatophilum).